Consider the following 263-residue polypeptide: Microtubule-associated protein RP/EB family member 1 (263 aa).

The 103-residue stretch at asparagine 14 to aspartate 116 folds into the Calponin-homology (CH) domain. The interval lysine 150–alanine 182 is disordered. In terms of domain architecture, EB1 C-terminal spans lysine 180–isoleucine 250.

This sequence belongs to the MAPRE family.

It localises to the cytoplasm. Its subcellular location is the cytoskeleton. It is found in the microtubule organizing center. The protein resides in the centrosome. The protein localises to the golgi apparatus. It localises to the spindle. Its subcellular location is the spindle pole. Its function is as follows. Plus-end tracking protein (+TIP) that binds to the plus-end of microtubules and regulates the dynamics of the microtubule cytoskeleton. Promotes cytoplasmic microtubule nucleation and elongation. Involved in mitotic spindle positioning by stabilizing microtubules and promoting dynamic connection between astral microtubules and the cortex during mitotic chromosome segregation. In Coturnix japonica (Japanese quail), this protein is Microtubule-associated protein RP/EB family member 1 (MAPRE1).